The primary structure comprises 486 residues: tRNA sulfurtransferase (486 aa).

Residues 60–166 (QKICAMLINI…DNQLFIIIKR (107 aa)) enclose the THUMP domain. ATP contacts are provided by residues 184–185 (LI), lysine 266, glycine 288, and glutamine 297. A disulfide bridge connects residues cysteine 345 and cysteine 458. The Rhodanese domain occupies 406-484 (LDSTDVVLDI…GFSNVKIYRP (79 aa)). Cysteine 458 serves as the catalytic Cysteine persulfide intermediate.

It belongs to the ThiI family.

It is found in the cytoplasm. The catalysed reaction is [ThiI sulfur-carrier protein]-S-sulfanyl-L-cysteine + a uridine in tRNA + 2 reduced [2Fe-2S]-[ferredoxin] + ATP + H(+) = [ThiI sulfur-carrier protein]-L-cysteine + a 4-thiouridine in tRNA + 2 oxidized [2Fe-2S]-[ferredoxin] + AMP + diphosphate. It carries out the reaction [ThiS sulfur-carrier protein]-C-terminal Gly-Gly-AMP + S-sulfanyl-L-cysteinyl-[cysteine desulfurase] + AH2 = [ThiS sulfur-carrier protein]-C-terminal-Gly-aminoethanethioate + L-cysteinyl-[cysteine desulfurase] + A + AMP + 2 H(+). Its pathway is cofactor biosynthesis; thiamine diphosphate biosynthesis. Its function is as follows. Catalyzes the ATP-dependent transfer of a sulfur to tRNA to produce 4-thiouridine in position 8 of tRNAs, which functions as a near-UV photosensor. Also catalyzes the transfer of sulfur to the sulfur carrier protein ThiS, forming ThiS-thiocarboxylate. This is a step in the synthesis of thiazole, in the thiamine biosynthesis pathway. The sulfur is donated as persulfide by IscS. This chain is tRNA sulfurtransferase, found in Blochmanniella pennsylvanica (strain BPEN).